Here is a 235-residue protein sequence, read N- to C-terminus: Pyridoxine 5'-phosphate synthase (235 aa).

Asn6 provides a ligand contact to 3-amino-2-oxopropyl phosphate. Position 8 to 9 (Asp8 to His9) interacts with 1-deoxy-D-xylulose 5-phosphate. Arg17 is a binding site for 3-amino-2-oxopropyl phosphate. His42 (proton acceptor) is an active-site residue. The 1-deoxy-D-xylulose 5-phosphate site is built by Arg44 and His49. Glu69 (proton acceptor) is an active-site residue. Thr99 is a binding site for 1-deoxy-D-xylulose 5-phosphate. His188 acts as the Proton donor in catalysis. Residues Gly189 and Gly210–His211 contribute to the 3-amino-2-oxopropyl phosphate site.

It belongs to the PNP synthase family. In terms of assembly, homooctamer; tetramer of dimers.

Its subcellular location is the cytoplasm. It carries out the reaction 3-amino-2-oxopropyl phosphate + 1-deoxy-D-xylulose 5-phosphate = pyridoxine 5'-phosphate + phosphate + 2 H2O + H(+). Its pathway is cofactor biosynthesis; pyridoxine 5'-phosphate biosynthesis; pyridoxine 5'-phosphate from D-erythrose 4-phosphate: step 5/5. Catalyzes the complicated ring closure reaction between the two acyclic compounds 1-deoxy-D-xylulose-5-phosphate (DXP) and 3-amino-2-oxopropyl phosphate (1-amino-acetone-3-phosphate or AAP) to form pyridoxine 5'-phosphate (PNP) and inorganic phosphate. The chain is Pyridoxine 5'-phosphate synthase from Wolbachia pipientis subsp. Culex pipiens (strain wPip).